The following is a 174-amino-acid chain: Protein MOTHER of FT and TFL1 homolog 2 (174 aa).

The protein belongs to the phosphatidylethanolamine-binding protein family.

Its function is as follows. May form complexes with phosphorylated ligands by interfering with kinases and their effectors. This is Protein MOTHER of FT and TFL1 homolog 2 from Oryza sativa subsp. japonica (Rice).